A 381-amino-acid chain; its full sequence is Glycerophosphocholine acyltransferase 1 (381 aa).

The Cytoplasmic portion of the chain corresponds to 1 to 63; sequence MANNEDSNSN…IAKQAEEHER (63 aa). Residues 64 to 84 form a helical membrane-spanning segment; sequence FINKVTHLVGVLGFGGFCFLL. The Lumenal portion of the chain corresponds to 85 to 89; that stretch reads GARPQ. Residues 90–110 form a helical membrane-spanning segment; it reads DIPLVYCFFYVIFVPLRWIYY. The Cytoplasmic portion of the chain corresponds to 111–116; it reads RFKKWH. A helical transmembrane segment spans residues 117–137; sequence YYLLDFCYYANTIFLVDLLLY. Residues 138–141 lie on the Lumenal side of the membrane; it reads PKNE. A helical membrane pass occupies residues 142–162; it reads KLFMVCFSFAEGPLAWAIIVW. Residues 163–173 lie on the Cytoplasmic side of the membrane; sequence RCSLVFSSPDK. The chain crosses the membrane as a helical span at residues 174-194; it reads IVSVLIHLLPGLVFFTIRWWN. Residues 195–223 are Lumenal-facing; sequence PATFAAMHPVGTDRRVSWPYVEDKAYLFT. The helical transmembrane segment at 224–244 threads the bilayer; the sequence is WLFLVPLVVYTLWQVLYFLIV. Topologically, residues 245-291 are cytoplasmic; sequence NVLRRQRLLRDPEVMTSYRELSKKAEKANNKLWQLSGLLGDQNRIWM. A helical transmembrane segment spans residues 292 to 312; the sequence is YILFQAIFTVATMALTVPIFL. Topologically, residues 313-315 are lumenal; the sequence is SYR. A helical membrane pass occupies residues 316-336; the sequence is LHVIFQILKISAAVWNGGSFL. At 337 to 381 the chain is on the cytoplasmic side; that stretch reads LEVMPRQVIQKEKKKKAEMQPIEEQILHHEAVSHPTENEPKSTET.

The protein belongs to the GPC1 family.

It localises to the membrane. It catalyses the reaction sn-glycerol 3-phosphocholine + an acyl-CoA = a 1-acyl-sn-glycero-3-phosphocholine + CoA. The enzyme catalyses sn-glycero-3-phosphoethanolamine + an acyl-CoA = a monoacyl-sn-glycero-3-phosphoethanolamine + CoA. The catalysed reaction is sn-glycerol 3-phosphocholine + (9Z)-octadecenoyl-CoA = (9Z-octadecenoyl)-sn-glycero-3-phosphocholine + CoA. In terms of biological role, glycerophosphocholine acyltransferase (GPCAT) that utilizes acyl-CoA to acylate glycero-3-phosphocholine (GPC), forming lysophosphatidylcholine (LPC). Shows broad acyl specificities with a preference for 16:0-CoA, polyunsaturated acyl-CoA, and the hydroxylated ricinoleoyl-CoA. Also catalyzes the acylation of glycero-3-phosphoethanolamine (GPE) with acyl-CoA. In addition to acyl-CoA, GPCAT efficiently utilizes LPC and lysophosphatidylethanolamine (LPE) as acyl donors in the acylation of GPC. Contributes to the maintenance of phosphatidylcholine (PC) homeostasis and might also have specific functions in acyl editing of PC, such as transferring acyl groups modified at the sn-2 position of PC to the sn-1. The sequence is that of Glycerophosphocholine acyltransferase 1 from Arabidopsis thaliana (Mouse-ear cress).